The chain runs to 164 residues: Putative lung carcinoma-associated protein 10 (164 aa).

Residues 1 to 164 (MSSCPVHDCP…TQKPQTTVGQ (164 aa)) are disordered. Positions 23 to 40 (GSRGALRLRGGAPGSAAG) are enriched in low complexity. A compositionally biased stretch (polar residues) spans 152-164 (MQKTQKPQTTVGQ).

In Homo sapiens (Human), this protein is Putative lung carcinoma-associated protein 10 (LCA10).